The primary structure comprises 352 residues: N-acetyl-gamma-glutamyl-phosphate reductase (352 aa).

C155 is an active-site residue.

It belongs to the NAGSA dehydrogenase family. Type 1 subfamily.

The protein localises to the cytoplasm. It carries out the reaction N-acetyl-L-glutamate 5-semialdehyde + phosphate + NADP(+) = N-acetyl-L-glutamyl 5-phosphate + NADPH + H(+). The protein operates within amino-acid biosynthesis; L-arginine biosynthesis; N(2)-acetyl-L-ornithine from L-glutamate: step 3/4. Its function is as follows. Catalyzes the NADPH-dependent reduction of N-acetyl-5-glutamyl phosphate to yield N-acetyl-L-glutamate 5-semialdehyde. The sequence is that of N-acetyl-gamma-glutamyl-phosphate reductase from Brachyspira hyodysenteriae (strain ATCC 49526 / WA1).